The primary structure comprises 381 residues: N-acetyldiaminopimelate deacetylase (381 aa).

The active site involves D71. Catalysis depends on E130, which acts as the Proton acceptor.

This sequence belongs to the peptidase M20A family. N-acetyldiaminopimelate deacetylase subfamily.

It carries out the reaction N-acetyl-(2S,6S)-2,6-diaminopimelate + H2O = (2S,6S)-2,6-diaminopimelate + acetate. It participates in amino-acid biosynthesis; L-lysine biosynthesis via DAP pathway; LL-2,6-diaminopimelate from (S)-tetrahydrodipicolinate (acetylase route): step 3/3. Its function is as follows. Catalyzes the conversion of N-acetyl-diaminopimelate to diaminopimelate and acetate. The polypeptide is N-acetyldiaminopimelate deacetylase (Ligilactobacillus salivarius (strain UCC118) (Lactobacillus salivarius)).